We begin with the raw amino-acid sequence, 565 residues long: Oxygen-dependent choline dehydrogenase (565 aa).

Asp7–Glu36 is an FAD binding site. Residue His474 is the Proton acceptor of the active site.

This sequence belongs to the GMC oxidoreductase family. The cofactor is FAD.

It catalyses the reaction choline + A = betaine aldehyde + AH2. The catalysed reaction is betaine aldehyde + NAD(+) + H2O = glycine betaine + NADH + 2 H(+). Its pathway is amine and polyamine biosynthesis; betaine biosynthesis via choline pathway; betaine aldehyde from choline (cytochrome c reductase route): step 1/1. Its function is as follows. Involved in the biosynthesis of the osmoprotectant glycine betaine. Catalyzes the oxidation of choline to betaine aldehyde and betaine aldehyde to glycine betaine at the same rate. This is Oxygen-dependent choline dehydrogenase from Burkholderia mallei (strain ATCC 23344).